The following is a 390-amino-acid chain: Glutamyl-tRNA reductase (390 aa).

Substrate is bound by residues Thr-46–Arg-49, Ser-96, Glu-101–Gln-103, and Gln-107. Cys-47 functions as the Nucleophile in the catalytic mechanism. Residue Gly-176–Ala-181 coordinates NADP(+).

This sequence belongs to the glutamyl-tRNA reductase family. In terms of assembly, homodimer.

It carries out the reaction (S)-4-amino-5-oxopentanoate + tRNA(Glu) + NADP(+) = L-glutamyl-tRNA(Glu) + NADPH + H(+). It functions in the pathway porphyrin-containing compound metabolism; protoporphyrin-IX biosynthesis; 5-aminolevulinate from L-glutamyl-tRNA(Glu): step 1/2. In terms of biological role, catalyzes the NADPH-dependent reduction of glutamyl-tRNA(Glu) to glutamate 1-semialdehyde (GSA). In Thermus thermophilus (strain ATCC 27634 / DSM 579 / HB8), this protein is Glutamyl-tRNA reductase.